We begin with the raw amino-acid sequence, 536 residues long: Quinate permease (536 aa).

The Cytoplasmic portion of the chain corresponds to 1–26 (MTLLALKEDRPTPKAVYNWRVYTCAA). Residues 27-47 (IASFASCMIGYDSSFIGTTLA) traverse the membrane as a helical segment. Over 48–74 (LPSFTKEFDFASYTPGALALLQSNIVS) the chain is Extracellular. Residues 75-95 (VYQAGAFFGSLFAFATSYFLG) form a helical membrane-spanning segment. At 96–98 (RRR) the chain is on the cytoplasmic side. Residues 99–119 (SLIAFSVVFIIGAAIMLAADG) traverse the membrane as a helical segment. Residues 120 to 131 (QRRGVDPIIAGR) lie on the Extracellular side of the membrane. Residues 132-152 (VLAGIGVGGASNMVPIYISEL) form a helical membrane-spanning segment. Residues 153-160 (APPAVRGR) are Cytoplasmic-facing. A helical transmembrane segment spans residues 161-181 (LVGIYELGWQIGGLVGFWINY). The Extracellular portion of the chain corresponds to 182–195 (GVNTTMAPTRSQWL). Residue Asn-184 is glycosylated (N-linked (GlcNAc...) asparagine). Residues 196–216 (IPFAVQLIPAGLLFLGSFWIP) traverse the membrane as a helical segment. The Cytoplasmic segment spans residues 217-285 (ESPRWLFANG…SLKQPKVRWR (69 aa)). The chain crosses the membrane as a helical span at residues 286–306 (FFLGGMLFLWQNGSGINAINY). Residues 307 to 327 (YSPTVFRSIGITGTNTGFLTT) are Extracellular-facing. Residues 328–349 (GIFGVVKMVLTIIWLLWLVDLV) traverse the membrane as a helical segment. Topologically, residues 350–352 (GRR) are cytoplasmic. A helical transmembrane segment spans residues 353–373 (RILFVGATGGSLCMWFIGAYI). Topologically, residues 374–389 (KIAGPGTTKTEEAKLT) are extracellular. Residues 390-410 (SGGIAAIFFFYLWTAFYTPSW) traverse the membrane as a helical segment. The Cytoplasmic segment spans residues 411–435 (NGTPWVINSEMFDQNTRSLGQASAA). Residues 436–456 (ANNWFWNFIISRFTPQMFIKM) form a helical membrane-spanning segment. Residues 457-458 (EY) are Extracellular-facing. Residues 459 to 479 (GVYFFFASLMLLSVVFIYFFI) form a helical membrane-spanning segment. Residues 480–536 (PETKSIPLEAMDRLFAIKSVHNANKILMDELNFDRNPEREQSSLDEKDRVTQTENAV) are Cytoplasmic-facing. A compositionally biased stretch (basic and acidic residues) spans 516–530 (PEREQSSLDEKDRVT). The interval 516 to 536 (PEREQSSLDEKDRVTQTENAV) is disordered.

This sequence belongs to the major facilitator superfamily. Sugar transporter (TC 2.A.1.1) family.

The protein localises to the membrane. This chain is Quinate permease (qa-y), found in Neurospora africana.